A 252-amino-acid chain; its full sequence is 2-succinyl-6-hydroxy-2,4-cyclohexadiene-1-carboxylate synthase (252 aa).

Belongs to the AB hydrolase superfamily. MenH family. In terms of assembly, monomer.

It carries out the reaction 5-enolpyruvoyl-6-hydroxy-2-succinyl-cyclohex-3-ene-1-carboxylate = (1R,6R)-6-hydroxy-2-succinyl-cyclohexa-2,4-diene-1-carboxylate + pyruvate. It functions in the pathway quinol/quinone metabolism; 1,4-dihydroxy-2-naphthoate biosynthesis; 1,4-dihydroxy-2-naphthoate from chorismate: step 3/7. The protein operates within quinol/quinone metabolism; menaquinone biosynthesis. Its function is as follows. Catalyzes a proton abstraction reaction that results in 2,5-elimination of pyruvate from 2-succinyl-5-enolpyruvyl-6-hydroxy-3-cyclohexene-1-carboxylate (SEPHCHC) and the formation of 2-succinyl-6-hydroxy-2,4-cyclohexadiene-1-carboxylate (SHCHC). This chain is 2-succinyl-6-hydroxy-2,4-cyclohexadiene-1-carboxylate synthase, found in Klebsiella pneumoniae subsp. pneumoniae (strain ATCC 700721 / MGH 78578).